Here is a 938-residue protein sequence, read N- to C-terminus: Isoleucine--tRNA ligase (938 aa).

A 'HIGH' region motif is present at residues 58–68 (PYANGSIHIGH). Lys183 is modified (N6-acetyllysine). L-isoleucyl-5'-AMP is bound at residue Glu561. Positions 602–606 (KMSKS) match the 'KMSKS' region motif. Residue Lys605 coordinates ATP. Residues Cys901, Cys904, Cys921, and Cys924 each contribute to the Zn(2+) site.

This sequence belongs to the class-I aminoacyl-tRNA synthetase family. IleS type 1 subfamily. As to quaternary structure, monomer. Zn(2+) serves as cofactor.

The protein localises to the cytoplasm. It catalyses the reaction tRNA(Ile) + L-isoleucine + ATP = L-isoleucyl-tRNA(Ile) + AMP + diphosphate. Catalyzes the attachment of isoleucine to tRNA(Ile). As IleRS can inadvertently accommodate and process structurally similar amino acids such as valine, to avoid such errors it has two additional distinct tRNA(Ile)-dependent editing activities. One activity is designated as 'pretransfer' editing and involves the hydrolysis of activated Val-AMP. The other activity is designated 'posttransfer' editing and involves deacylation of mischarged Val-tRNA(Ile). This chain is Isoleucine--tRNA ligase, found in Escherichia coli O6:K15:H31 (strain 536 / UPEC).